The chain runs to 259 residues: uncharacterized protein (259 aa).

Residues 82–128 (NSGMAETIEEKREDFQKEEKEDFTEEQNIEDLLAAVADAEGRYQTNQ) are a coiled coil. The disordered stretch occupies residues 192-259 (LIQTQNQHPR…SSSRNSSTTS (68 aa)). Residues 228–240 (KKVHARSRKRRKT) are compositionally biased toward basic residues. A compositionally biased stretch (low complexity) spans 241–259 (SSSSSSSSSSSSRNSSTTS).

This is an uncharacterized protein from Homo sapiens (Human).